The sequence spans 811 residues: Glycerol-3-phosphate acyltransferase (811 aa).

The HXXXXD motif motif lies at 303-308; sequence HRSHMD.

The protein belongs to the GPAT/DAPAT family.

It is found in the cell inner membrane. It carries out the reaction sn-glycerol 3-phosphate + an acyl-CoA = a 1-acyl-sn-glycero-3-phosphate + CoA. The protein operates within phospholipid metabolism; CDP-diacylglycerol biosynthesis; CDP-diacylglycerol from sn-glycerol 3-phosphate: step 1/3. The protein is Glycerol-3-phosphate acyltransferase of Haemophilus ducreyi (strain 35000HP / ATCC 700724).